Here is a 445-residue protein sequence, read N- to C-terminus: tRNA-2-methylthio-N(6)-dimethylallyladenosine synthase (445 aa).

In terms of domain architecture, MTTase N-terminal spans 2–122 (KKAFVKSYGC…LPDLLARSRE (121 aa)). Residues C11, C47, C85, C157, C161, and C164 each coordinate [4Fe-4S] cluster. In terms of domain architecture, Radical SAM core spans 143–378 (RTLGASAFLT…LDSQRHAYQR (236 aa)). A TRAM domain is found at 378–440 (RAAAGRVFDV…SNSLFGELVS (63 aa)).

Belongs to the methylthiotransferase family. MiaB subfamily. Monomer. The cofactor is [4Fe-4S] cluster.

It is found in the cytoplasm. It carries out the reaction N(6)-dimethylallyladenosine(37) in tRNA + (sulfur carrier)-SH + AH2 + 2 S-adenosyl-L-methionine = 2-methylsulfanyl-N(6)-dimethylallyladenosine(37) in tRNA + (sulfur carrier)-H + 5'-deoxyadenosine + L-methionine + A + S-adenosyl-L-homocysteine + 2 H(+). Catalyzes the methylthiolation of N6-(dimethylallyl)adenosine (i(6)A), leading to the formation of 2-methylthio-N6-(dimethylallyl)adenosine (ms(2)i(6)A) at position 37 in tRNAs that read codons beginning with uridine. The polypeptide is tRNA-2-methylthio-N(6)-dimethylallyladenosine synthase (Methylobacterium radiotolerans (strain ATCC 27329 / DSM 1819 / JCM 2831 / NBRC 15690 / NCIMB 10815 / 0-1)).